A 638-amino-acid chain; its full sequence is Growth hormone receptor (638 aa).

An N-terminal signal peptide occupies residues 1–18 (MDLWRVFLTLALAVSSDM). Over 19-265 (FPGSGATPAT…TLAACEEDFR (247 aa)) the chain is Extracellular. 2 disulfide bridges follow: C56–C66 and C101–C112. The N-linked (GlcNAc...) asparagine glycan is linked to N115. The cysteines at positions 126 and 140 are disulfide-linked. In terms of domain architecture, Fibronectin type-III spans 151-254 (PPIGLNWTLL…EVLRVTFPQM (104 aa)). N-linked (GlcNAc...) asparagine glycans are attached at residues N156, N161, and N200. Residues 240 to 244 (YSEFS) carry the WSXWS motif motif. The helical transmembrane segment at 266–289 (FPWFLIIIFGIFGVAVMLFVVIFS) threads the bilayer. Residues 290–638 (KQQRIKMLIL…STDQLNKIMQ (349 aa)) are Cytoplasmic-facing. Residues 295-380 (KMLILPPVPV…QEKSAGILGA (86 aa)) form a required for JAK2 binding region. The Box 1 motif signature appears at 298 to 306 (ILPPVPVPK). Residues 341–350 (DSWVEFIELD) carry the UbE motif motif. S342 bears the Phosphoserine mark. The tract at residues 357 to 389 (KTEESDTDRLLSDDQEKSAGILGAKDDDSGRTS) is disordered. Positions 363-373 (TDRLLSDDQEK) are enriched in basic and acidic residues. Y487 and Y594 each carry phosphotyrosine.

This sequence belongs to the type I cytokine receptor family. Type 1 subfamily. In terms of assembly, on growth hormone (GH) binding, forms homodimers and binds JAK2 via a box 1-containing domain. In terms of processing, the soluble form (GHBP) is produced by phorbol ester-promoted proteolytic cleavage at the cell surface (shedding) by ADAM17/TACE. Shedding is inhibited by growth hormone (GH) binding to the receptor probably due to a conformational change in GHR rendering the receptor inaccessible to ADAM17. Post-translationally, on GH binding, phosphorylated on tyrosine residues in the cytoplasmic domain by JAK2. Phosphorylation on either (or all of) Tyr-534, Tyr-566 and/or Tyr-627 is required for STAT5 activation. Phosphorylation on Tyr-333 would seem necessary for JAK2 activation. Ubiquitinated by the ECS(SOCS2) complex following ligand-binding and phosphorylation by JAK2, leading to its degradation by the proteasome. Regulation by the ECS(SOCS2) complex acts as a negative feedback loop of growth hormone receptor signaling. Ubiquitination is not sufficient for GHR internalization. In terms of tissue distribution, highest expression in liver. Also expressed in heart, kidney and muscle.

The protein resides in the cell membrane. It localises to the secreted. In terms of biological role, receptor for pituitary gland growth hormone involved in regulating postnatal body growth. On ligand binding, couples to, and activates the JAK2/STAT5 pathway. Receptor for pituitary gland growth hormone (GH1) involved in regulating postnatal body growth. On ligand binding, couples to the JAK2/STAT5 pathway. Its function is as follows. The soluble form (GHBP) acts as a reservoir of growth hormone in plasma and may be a modulator/inhibitor of GH signaling. The sequence is that of Growth hormone receptor (Ghr) from Rattus norvegicus (Rat).